Reading from the N-terminus, the 698-residue chain is Probable xyloglucan glycosyltransferase 2 (698 aa).

The next 2 membrane-spanning stretches (helical) occupy residues 124–144 and 190–210; these read GFLA…WNGW and ILLF…CFWI. Residue D272 is part of the active site. Residues D331 and D333 each coordinate substrate. D425 is a catalytic residue. Helical transmembrane passes span 503-523, 528-548, 653-668, and 673-693; these read LILP…TMFV, LPVW…ILPS, LALS…RSLL, and IHFY…LDLI.

This sequence belongs to the glycosyltransferase 2 family. Plant cellulose synthase-like C subfamily.

It localises to the golgi apparatus membrane. Functionally, probable beta-1,4-glucan synthase rather involved in the synthesis of the xyloglucan backbone than cellulose. Seems to work simultaneously with xyloglucan 6-xylosyltransferase. Xyloglucan is a noncellulosic polysaccharides of plant cell wall and consists of a glucan backbone substituted by xylose, galactose and fucose. This chain is Probable xyloglucan glycosyltransferase 2 (CSLC2), found in Oryza sativa subsp. japonica (Rice).